The following is a 40-amino-acid chain: Photosystem II reaction center protein X (40 aa).

Residues 10–30 (FFYSILFGAIVLGLLGGGFIF) form a helical membrane-spanning segment.

This sequence belongs to the PsbX family. Type 1 subfamily. PSII is composed of 1 copy each of membrane proteins PsbA, PsbB, PsbC, PsbD, PsbE, PsbF, PsbH, PsbI, PsbJ, PsbK, PsbL, PsbM, PsbT, PsbX, PsbY, PsbZ, Psb30/Ycf12, peripheral proteins PsbO, CyanoQ (PsbQ), PsbU, PsbV and a large number of cofactors. It forms dimeric complexes.

The protein resides in the cellular thylakoid membrane. In terms of biological role, involved in the binding and/or turnover of quinones at the Q(B) site of photosystem II (PSII). PSII is a light-driven water plastoquinone oxidoreductase, using light energy to abstract electrons from H(2)O, generating a proton gradient subsequently used for ATP formation. The sequence is that of Photosystem II reaction center protein X from Acaryochloris marina (strain MBIC 11017).